The sequence spans 767 residues: 5-methyltetrahydropteroyltriglutamate--homocysteine methyltransferase (767 aa).

5-methyltetrahydropteroyltri-L-glutamate is bound by residues 17–20 and K117; that span reads RELK. L-homocysteine-binding positions include 441–443 and E494; that span reads IGS. L-methionine contacts are provided by residues 441-443 and E494; that span reads IGS. 5-methyltetrahydropteroyltri-L-glutamate is bound by residues 525–526 and W571; that span reads RC. D609 is an L-homocysteine binding site. D609 provides a ligand contact to L-methionine. E615 lines the 5-methyltetrahydropteroyltri-L-glutamate pocket. Zn(2+) contacts are provided by H652, C654, and E676. H705 serves as the catalytic Proton donor. C737 is a binding site for Zn(2+).

The protein belongs to the vitamin-B12 independent methionine synthase family. Zn(2+) is required as a cofactor.

It catalyses the reaction 5-methyltetrahydropteroyltri-L-glutamate + L-homocysteine = tetrahydropteroyltri-L-glutamate + L-methionine. The protein operates within amino-acid biosynthesis; L-methionine biosynthesis via de novo pathway; L-methionine from L-homocysteine (MetE route): step 1/1. Functionally, catalyzes the transfer of a methyl group from 5-methyltetrahydrofolate to homocysteine resulting in methionine formation. This is 5-methyltetrahydropteroyltriglutamate--homocysteine methyltransferase from Bifidobacterium longum (strain NCC 2705).